The primary structure comprises 572 residues: Serine/threonine-protein kinase pak-1 (572 aa).

Disordered stretches follow at residues 1 to 71 (MKAF…SRPS) and 156 to 195 (QPYS…QGVP). The CRIB domain occupies 67–80 (ISRPSNFEHTIHVG). The segment at 81 to 294 (YDPKTGEFTG…IVSIGNPDRK (214 aa)) is linker. Residues 178 to 195 (PMTTSTSSAGYNSKQGVP) are compositionally biased toward polar residues. Residues 295-546 (YRKVDKIGSG…ASQLLTHPFL (252 aa)) enclose the Protein kinase domain. ATP-binding positions include 301 to 309 (IGSGASGSV) and lysine 324. Aspartate 414 (proton acceptor) is an active-site residue.

The protein belongs to the protein kinase superfamily. STE Ser/Thr protein kinase family. STE20 subfamily. Interacts with cdc-42 (GTP-bound form) and cedd-10 (GTP-bound form). Mg(2+) is required as a cofactor. Mn(2+) serves as cofactor. Specifically colocalized with cdc-42 and ced-10 at all hypodermal cell boundaries during embryo elongation throughout the second phase of embryogenesis. Expressed mainly in pharyngeal muscles, the CAN neurons, motor neurons in the ventral nerve cord, several cells in the tail region (including the B and Y cells from L1 to adult, the hypodermal blast cell T in the L1 and some of its progeny in later stages), and the distal tip cells.

It localises to the cell membrane. The protein resides in the cytoplasm. It is found in the cell projection. The protein localises to the axon. Its subcellular location is the perikaryon. The enzyme catalyses L-seryl-[protein] + ATP = O-phospho-L-seryl-[protein] + ADP + H(+). It catalyses the reaction L-threonyl-[protein] + ATP = O-phospho-L-threonyl-[protein] + ADP + H(+). Its function is as follows. Required for hypodermal cell fusion, together with cdc-42 and ced-10, leading to embryonic body elongation, which involves dramatic cytoskeletal reorganization. Plays a redundant role with max-2 in dorsal axonal guidance in ventral cord commissural motoneurons and in P neuroblast migration. Acts probably downstream of Rho GTPases mig-2 and ced-10 to regulate these 2 processes. Involved in orientating axonal growth of HSN neurons. During gonad morphogenesis and probably in association with pix-1 and git-1, involved in the migration of distal tip cell (DTC) and in maintaining their sharp tapering morphology. In addition, plays a redundant role with max-2 in DTC-mediated guidance of gonad elongation. May phosphorylate mlc-4. This chain is Serine/threonine-protein kinase pak-1 (pak-1), found in Caenorhabditis elegans.